Reading from the N-terminus, the 620-residue chain is Chaperone protein DnaK (620 aa).

Thr-197 bears the Phosphothreonine; by autocatalysis mark. Residues 597–620 form a disordered region; that stretch reads AMANKNNAEQPKKKDDDVIDAEVE.

The protein belongs to the heat shock protein 70 family.

Functionally, acts as a chaperone. In Helicobacter pylori (strain G27), this protein is Chaperone protein DnaK.